Consider the following 276-residue polypeptide: Protein PXR1 (276 aa).

The tract at residues 1 to 23 is disordered; it reads MGLAGTKIKQRFGNDPRNTNWSN. The region spanning 25 to 71 is the G-patch domain; the sequence is TSRFGHQYLAKMGWQQGSGLGLVSHALTTHVKVSIKDDNLGLGAKLH. Positions 152-172 are enriched in basic and acidic residues; it reads DDGKKSRKRKADESETKEDKK. The disordered stretch occupies residues 152 to 261; it reads DDGKKSRKRK…SKWIKQKRAS (110 aa). Basic residues predominate over residues 173 to 218; that stretch reads TLKKHKKEKKDKKEKKEKKKKKEKKDKKDKKDKKNKKDKKDKKDKK. Residues 219–228 show a composition bias toward basic and acidic residues; it reads DKKDKIRTGS. Residues 229 to 239 are compositionally biased toward polar residues; sequence DETLVSKESSA.

It belongs to the PINX1 family.

Its subcellular location is the nucleus. The protein resides in the nucleolus. In terms of biological role, involved in rRNA-processing at A0, A1 and A2 sites and negatively regulates telomerase. This Candida albicans (strain SC5314 / ATCC MYA-2876) (Yeast) protein is Protein PXR1 (PXR1).